The sequence spans 350 residues: C5a anaphylatoxin chemotactic receptor 1 (350 aa).

The Extracellular segment spans residues 1 to 37; that stretch reads MDSFNYTTPDYGHYDDKDTLDPNTPVDKTSNTLRVPD. Residues 10–18 are required for CHIPS binding; it reads DYGHYDDKD. A sulfotyrosine mark is found at Tyr11 and Tyr14. The tract at residues 21–30 is involved in C5a binding; that stretch reads DPNTPVDKTS. The chain crosses the membrane as a helical span at residues 38-64; sequence ILALVIFAVVFLVGVLGNALVVWVTAF. Residues 65-69 are Cytoplasmic-facing; sequence EVKRT. A helical transmembrane segment spans residues 70–93; that stretch reads INAIWFLNLAVADFLSCLALPILF. The Extracellular portion of the chain corresponds to 94-110; sequence TSIVQHHHWPFGGAACR. The cysteines at positions 109 and 188 are disulfide-linked. The helical transmembrane segment at 111 to 132 threads the bilayer; it reads ILPSLILLNMYASILLLATISA. The Cytoplasmic portion of the chain corresponds to 133–153; it reads DRFLLVFKPIWCQNFRGAGLA. The helical transmembrane segment at 154–174 threads the bilayer; the sequence is WIACAVAWGLALLLTIPSFLY. At 175–200 the chain is on the extracellular side; sequence RVVREEYFPPKVLCGVDYSHDKQRER. A helical transmembrane segment spans residues 201 to 226; it reads AVAVVRLVLGFLWPLLTLTICYTFIL. Residues 227–242 are Cytoplasmic-facing; it reads LRTWSRRATRSTKTLK. A helical transmembrane segment spans residues 243–265; it reads VVVAVVASFFIFWLPYQVTGIMM. The Extracellular portion of the chain corresponds to 266-282; that stretch reads SFLEPSSPTFLLLKKLD. A helical transmembrane segment spans residues 283–303; the sequence is SLCVSFAYINCCINPIIYVVA. The Cytoplasmic segment spans residues 304–350; sequence GQGFQGRLRKSLPSLLRNVLTEESVVRESKSFTRSTVDTMAEKTQAV. A phosphoserine mark is found at Ser314, Ser317, Ser327, Ser332, Ser334, and Ser338.

Belongs to the G-protein coupled receptor 1 family. As to quaternary structure, homodimer. May also form higher-order oligomers. Interacts (when phosphorylated) with ARRB1 and ARRB2; the interaction is associated with internalization of C5aR. Interacts (via N-terminal domain) with S.aureus chemotaxis inhibitory protein (CHIPS); the interaction blocks the receptor and may thus inhibit the immune response. In terms of processing, sulfation plays a critical role in the association of C5aR with C5a, but no significant role in the ability of the receptor to transduce a signal and mobilize calcium in response to a small peptide agonist. Sulfation at Tyr-14 is important for CHIPS binding. Post-translationally, phosphorylated on serine residues in response to C5a binding, resulting in internalization of the receptor and short-term desensitization to C5a.

The protein localises to the cell membrane. The protein resides in the cytoplasmic vesicle. Receptor for the chemotactic and inflammatory peptide anaphylatoxin C5a. The ligand interacts with at least two sites on the receptor: a high-affinity site on the extracellular N-terminus, and a second site in the transmembrane region which activates downstream signaling events. Receptor activation stimulates chemotaxis, granule enzyme release, intracellular calcium release and superoxide anion production. In Gorilla gorilla gorilla (Western lowland gorilla), this protein is C5a anaphylatoxin chemotactic receptor 1 (C5AR1).